The following is a 161-amino-acid chain: Allophycocyanin alpha chain (161 aa).

The residue at position 71 (Asn-71) is an N4-methylasparagine. Cys-81 contributes to the (2R,3E)-phycocyanobilin binding site.

The protein belongs to the phycobiliprotein family. Heterodimer of an alpha and a beta chain. Post-translationally, contains one covalently linked phycocyanobilin chromophore.

Its subcellular location is the plastid. It localises to the chloroplast thylakoid membrane. Its function is as follows. Light-harvesting photosynthetic bile pigment-protein from the phycobiliprotein complex. Allophycocyanin has a maximum absorption at approximately 650 nanometers. This chain is Allophycocyanin alpha chain (apcA), found in Porphyra purpurea (Red seaweed).